A 93-amino-acid chain; its full sequence is MKPDIHPAYRTVLFHDTAADAYFLIGSTVDTDRTQQHTDGTTYPYVALDVSSASHPMYTGQQRKTTTEGRIAGFNKRFASFGSGSNKETAATQ.

It belongs to the bacterial ribosomal protein bL31 family. Type B subfamily. As to quaternary structure, part of the 50S ribosomal subunit.

The polypeptide is Large ribosomal subunit protein bL31B (Pseudomonas syringae pv. tomato (strain ATCC BAA-871 / DC3000)).